Reading from the N-terminus, the 352-residue chain is Maleylacetate reductase (352 aa).

This sequence belongs to the iron-containing alcohol dehydrogenase family.

It carries out the reaction 3-oxoadipate + NAD(+) = maleylacetate + NADH + H(+). The enzyme catalyses 3-oxoadipate + NADP(+) = maleylacetate + NADPH + H(+). It participates in xenobiotic degradation; (2,4,5-trichlorophenoxy)acetate degradation. The protein is Maleylacetate reductase (tftE) of Burkholderia cepacia (Pseudomonas cepacia).